A 518-amino-acid chain; its full sequence is Putative cytochrome P450 CYP13A7 (518 aa).

Cysteine 464 contributes to the heme binding site.

Belongs to the cytochrome P450 family. Heme is required as a cofactor.

In terms of biological role, cytochromes P450 are a group of heme-thiolate monooxygenases. They oxidize a variety of structurally unrelated compounds, including steroids, fatty acids, and xenobiotics. In Caenorhabditis elegans, this protein is Putative cytochrome P450 CYP13A7 (cyp-13A7).